Here is a 300-residue protein sequence, read N- to C-terminus: Estradiol 17-beta-dehydrogenase 11 (300 aa).

Residues 1–19 (MKFLLDVLLLLPLLIVCSL) form the signal peptide. 40–64 (LITGAGHGIGRLTAYEFAKLKSKLV) is a binding site for NADP(+). A substrate-binding site is contributed by S172. Y185 functions as the Proton acceptor in the catalytic mechanism.

Belongs to the short-chain dehydrogenases/reductases (SDR) family. 17-beta-HSD 3 subfamily.

It localises to the endoplasmic reticulum. Its subcellular location is the lipid droplet. It carries out the reaction 17beta-estradiol + NAD(+) = estrone + NADH + H(+). It catalyses the reaction 17beta-estradiol + NADP(+) = estrone + NADPH + H(+). Functionally, can convert androstan-3-alpha,17-beta-diol (3-alpha-diol) to androsterone in vitro, suggesting that it may participate in androgen metabolism during steroidogenesis. May act by metabolizing compounds that stimulate steroid synthesis and/or by generating metabolites that inhibit it. Has no activity toward DHEA (dehydroepiandrosterone), or A-dione (4-androste-3,17-dione), and only a slight activity toward testosterone to A-dione. The sequence is that of Estradiol 17-beta-dehydrogenase 11 (HSD17B11) from Pongo abelii (Sumatran orangutan).